A 156-amino-acid polypeptide reads, in one-letter code: Small ribosomal subunit protein uS7 (156 aa).

It belongs to the universal ribosomal protein uS7 family. Part of the 30S ribosomal subunit. Contacts proteins S9 and S11.

In terms of biological role, one of the primary rRNA binding proteins, it binds directly to 16S rRNA where it nucleates assembly of the head domain of the 30S subunit. Is located at the subunit interface close to the decoding center, probably blocks exit of the E-site tRNA. The sequence is that of Small ribosomal subunit protein uS7 from Streptococcus pyogenes serotype M12 (strain MGAS2096).